The primary structure comprises 1405 residues: DNA-directed RNA polymerase subunit beta' (1405 aa).

Cys-70, Cys-72, Cys-85, and Cys-88 together coordinate Zn(2+). Mg(2+) contacts are provided by Asp-458, Asp-460, and Asp-462. Residues Cys-813, Cys-887, Cys-894, and Cys-897 each coordinate Zn(2+).

It belongs to the RNA polymerase beta' chain family. As to quaternary structure, the RNAP catalytic core consists of 2 alpha, 1 beta, 1 beta' and 1 omega subunit. When a sigma factor is associated with the core the holoenzyme is formed, which can initiate transcription. Requires Mg(2+) as cofactor. Zn(2+) is required as a cofactor.

It carries out the reaction RNA(n) + a ribonucleoside 5'-triphosphate = RNA(n+1) + diphosphate. In terms of biological role, DNA-dependent RNA polymerase catalyzes the transcription of DNA into RNA using the four ribonucleoside triphosphates as substrates. The polypeptide is DNA-directed RNA polymerase subunit beta' (Albidiferax ferrireducens (strain ATCC BAA-621 / DSM 15236 / T118) (Rhodoferax ferrireducens)).